We begin with the raw amino-acid sequence, 522 residues long: tRNA-2-methylthio-N(6)-dimethylallyladenosine synthase (522 aa).

The 117-residue stretch at 24–140 (RTYEVKTYGC…LPTLLQRAEH (117 aa)) folds into the MTTase N-terminal domain. [4Fe-4S] cluster is bound by residues Cys33, Cys69, Cys103, Cys177, Cys181, and Cys184. The Radical SAM core domain occupies 163–399 (RESAYAGWVS…MVVQEQVCEE (237 aa)). In terms of domain architecture, TRAM spans 402–473 (QKLIGTTVEL…PFFLIADSGV (72 aa)).

Belongs to the methylthiotransferase family. MiaB subfamily. Monomer. It depends on [4Fe-4S] cluster as a cofactor.

The protein localises to the cytoplasm. It catalyses the reaction N(6)-dimethylallyladenosine(37) in tRNA + (sulfur carrier)-SH + AH2 + 2 S-adenosyl-L-methionine = 2-methylsulfanyl-N(6)-dimethylallyladenosine(37) in tRNA + (sulfur carrier)-H + 5'-deoxyadenosine + L-methionine + A + S-adenosyl-L-homocysteine + 2 H(+). Catalyzes the methylthiolation of N6-(dimethylallyl)adenosine (i(6)A), leading to the formation of 2-methylthio-N6-(dimethylallyl)adenosine (ms(2)i(6)A) at position 37 in tRNAs that read codons beginning with uridine. This is tRNA-2-methylthio-N(6)-dimethylallyladenosine synthase from Corynebacterium glutamicum (strain ATCC 13032 / DSM 20300 / JCM 1318 / BCRC 11384 / CCUG 27702 / LMG 3730 / NBRC 12168 / NCIMB 10025 / NRRL B-2784 / 534).